We begin with the raw amino-acid sequence, 99 residues long: Large ribosomal subunit protein P1 (99 aa).

In terms of assembly, part of the 50S ribosomal subunit. Homodimer, it forms part of the ribosomal stalk which helps the ribosome interact with GTP-bound translation factors. Forms both a pentameric uL10/P0(P1)2(P1)2 and heptameric uL10/P0(P1)2(P1)2(P1)2 complex, where uL10/P0 forms an elongated spine to which the P1 dimers bind in a sequential fashion. The proportion of heptameric complexes increases during cell growth.

Forms part of the ribosomal stalk, playing a central role in the interaction of the ribosome with GTP-bound translation factors. This is Large ribosomal subunit protein P1 from Methanococcus vannielii.